The chain runs to 139 residues: Protein FAM237B (139 aa).

A signal peptide spans 1 to 24; that stretch reads MCFATRRWFYLHLGCMMLINLVNA. Methionine 112 is subject to Methionine amide. Positions 113–139 are cleaved as a propeptide — removed in the mature form; it reads GRRQVMPPKYNFPQKITGGNLNVYLRE.

In terms of processing, the active form requires C-terminal amidation and disulfide bond formation.

Its subcellular location is the secreted. May be capable of activating GPR83 via the GNAQ signaling pathway. The chain is Protein FAM237B from Homo sapiens (Human).